Here is a 336-residue protein sequence, read N- to C-terminus: Holliday junction branch migration complex subunit RuvB (336 aa).

Positions 4–184 (ADRLISAGTT…FGIVQRLEFY (181 aa)) are large ATPase domain (RuvB-L). Residues I23, R24, G65, K68, T69, T70, 131-133 (EDY), R174, Y184, and R221 each bind ATP. T69 serves as a coordination point for Mg(2+). The segment at 185–255 (QVPDLQYIVS…IAAQALDMLN (71 aa)) is small ATPAse domain (RuvB-S). Positions 258–336 (AEGFDYMDRK…HFGITPPEMP (79 aa)) are head domain (RuvB-H). DNA-binding residues include R294, R313, and R318.

The protein belongs to the RuvB family. In terms of assembly, homohexamer. Forms an RuvA(8)-RuvB(12)-Holliday junction (HJ) complex. HJ DNA is sandwiched between 2 RuvA tetramers; dsDNA enters through RuvA and exits via RuvB. An RuvB hexamer assembles on each DNA strand where it exits the tetramer. Each RuvB hexamer is contacted by two RuvA subunits (via domain III) on 2 adjacent RuvB subunits; this complex drives branch migration. In the full resolvosome a probable DNA-RuvA(4)-RuvB(12)-RuvC(2) complex forms which resolves the HJ.

It is found in the cytoplasm. It catalyses the reaction ATP + H2O = ADP + phosphate + H(+). In terms of biological role, the RuvA-RuvB-RuvC complex processes Holliday junction (HJ) DNA during genetic recombination and DNA repair, while the RuvA-RuvB complex plays an important role in the rescue of blocked DNA replication forks via replication fork reversal (RFR). RuvA specifically binds to HJ cruciform DNA, conferring on it an open structure. The RuvB hexamer acts as an ATP-dependent pump, pulling dsDNA into and through the RuvAB complex. RuvB forms 2 homohexamers on either side of HJ DNA bound by 1 or 2 RuvA tetramers; 4 subunits per hexamer contact DNA at a time. Coordinated motions by a converter formed by DNA-disengaged RuvB subunits stimulates ATP hydrolysis and nucleotide exchange. Immobilization of the converter enables RuvB to convert the ATP-contained energy into a lever motion, pulling 2 nucleotides of DNA out of the RuvA tetramer per ATP hydrolyzed, thus driving DNA branch migration. The RuvB motors rotate together with the DNA substrate, which together with the progressing nucleotide cycle form the mechanistic basis for DNA recombination by continuous HJ branch migration. Branch migration allows RuvC to scan DNA until it finds its consensus sequence, where it cleaves and resolves cruciform DNA. The protein is Holliday junction branch migration complex subunit RuvB of Shigella boydii serotype 18 (strain CDC 3083-94 / BS512).